We begin with the raw amino-acid sequence, 86 residues long: Centromere protein W (86 aa).

This sequence belongs to the CENP-W/WIP1 family. As to quaternary structure, heterodimer with CENPT; this dimer coassembles with CENPS-CENPX heterodimers at centromeres to form the tetrameric CENP-T-W-S-X complex, which is a subcomplex of the large constitutive centromere-associated network (CCAN, also known as the interphase centromere complex or ICEN). Interacts with NPM1.

The protein resides in the nucleus. It localises to the chromosome. The protein localises to the centromere. Its subcellular location is the kinetochore. It is found in the nucleus matrix. The protein resides in the nucleolus. Component of the CENPA-NAC (nucleosome-associated) complex, a complex that plays a central role in assembly of kinetochore proteins, mitotic progression and chromosome segregation. The CENPA-NAC complex recruits the CENPA-CAD (nucleosome distal) complex and may be involved in incorporation of newly synthesized CENPA into centromeres. Part of a nucleosome-associated complex that binds specifically to histone H3-containing nucleosomes at the centromere, as opposed to nucleosomes containing CENPA. Component of the heterotetrameric CENP-T-W-S-X complex that binds and supercoils DNA, and plays an important role in kinetochore assembly. CENPW has a fundamental role in kinetochore assembly and function. It is one of the inner kinetochore proteins, with most further proteins binding downstream. Required for normal chromosome organization and normal progress through mitosis. The protein is Centromere protein W (Cenpw) of Mus musculus (Mouse).